A 673-amino-acid polypeptide reads, in one-letter code: F420-dependent formate dehydrogenase subunit alpha (673 aa).

The 4Fe-4S Mo/W bis-MGD-type domain occupies 3-59 (FKIVNTICPYCGVGCGLGLVVKDGRVIGIHPNKRHPINEGKLCAKGNYCYQFIHSKD). C10, C13, C17, and C45 together coordinate [4Fe-4S] cluster. A non-standard amino acid (selenocysteine) is located at residue U131.

Belongs to the prokaryotic molybdopterin-containing oxidoreductase family. As to quaternary structure, dimer of an alpha (FdhA) and a beta (FdhB) subunit. [4Fe-4S] cluster is required as a cofactor. The cofactor is Mo-bis(molybdopterin guanine dinucleotide). It depends on Zn(2+) as a cofactor.

The enzyme catalyses oxidized coenzyme F420-(gamma-L-Glu)(n) + formate + 2 H(+) = reduced coenzyme F420-(gamma-L-Glu)(n) + CO2. Catalyzes the oxidation of formate to carbon dioxide, with coenzyme F420 as the electron acceptor. This is F420-dependent formate dehydrogenase subunit alpha (fdhA) from Methanocaldococcus jannaschii (strain ATCC 43067 / DSM 2661 / JAL-1 / JCM 10045 / NBRC 100440) (Methanococcus jannaschii).